A 380-amino-acid chain; its full sequence is Negative elongation factor E (380 aa).

The stretch at 7–36 forms a coiled coil; sequence GLSEEEEALQKKFNKLKKKKKALLALKKQS. Residues 30 to 43 show a composition bias toward low complexity; sequence LALKKQSSSSTTSQ. The segment at 30-67 is disordered; the sequence is LALKKQSSSSTTSQGGVKRSLSEQPVMDTATATEQAKQ. Residue Ser51 is modified to Phosphoserine. Lys78 is covalently cross-linked (Glycyl lysine isopeptide (Lys-Gly) (interchain with G-Cter in SUMO1); alternate). Residue Lys78 forms a Glycyl lysine isopeptide (Lys-Gly) (interchain with G-Cter in SUMO2); alternate linkage. Residues 79–258 form a disordered region; the sequence is AETKNSGFKR…SDSFPERRAP (180 aa). Residue Lys82 forms a Glycyl lysine isopeptide (Lys-Gly) (interchain with G-Cter in SUMO2) linkage. The segment covering 90 to 101 has biased composition (basic and acidic residues); sequence RTLEGKLKDPEK. Phosphoserine is present on residues Ser113 and Ser115. Position 122 is a polyADP-ribosyl glutamic acid (Glu122). Ser131 and Ser139 each carry phosphoserine. The residue at position 151 (Glu151) is a PolyADP-ribosyl glutamic acid. Ser165 carries the post-translational modification Phosphoserine. A PolyADP-ribosyl glutamic acid modification is found at Glu172. At Ser179 the chain carries Phosphoserine. Residues Ser181, Ser185, and Ser187 each carry the phosphoserine; by CDK9 modification. Repeat copies occupy residues 184–185, 186–187, 188–189, and 190–191. The 30 X 2 AA approximate tandem repeats of R-[DSNE] stretch occupies residues 184–243; that stretch reads RSRSRDRSHERNRDRDRDRERDRDRDRDRDRERDRDRDRDRDRDRERDRDRERDRDRDRE. Residues 186 to 256 show a composition bias toward basic and acidic residues; it reads RSRDRSHERN…RRSDSFPERR (71 aa). Phosphoserine; by CDK9 is present on Ser191. The stretch at 192–193 is one 5; approximate repeat; the sequence is HE. A run of 25 repeats spans residues 194–195, 196–197, 198–199, 200–201, 202–203, 204–205, 206–207, 208–209, 210–211, 212–213, 214–215, 216–217, 218–219, 220–221, 222–223, 224–225, 226–227, 228–229, 230–231, 232–233, 234–235, 236–237, 238–239, 240–241, and 242–243. Residues Ser249 and Ser251 each carry the phosphoserine modification. In terms of domain architecture, RRM spans 262 to 332; that stretch reads NTLYVYGEDM…VQLKVNIARK (71 aa). A phosphothreonine mark is found at Thr272 and Thr274. 2 positions are modified to phosphoserine: Ser281 and Ser353. Position 374 is a polyADP-ribosyl glutamic acid (Glu374).

The protein belongs to the RRM NELF-E family. As to quaternary structure, the NELF complex is composed of NELFA, NELFB, NELFCD (isoform NELF-C or isoform NELF-D) and NELFE. Interacts with NELFB. In terms of assembly, (Microbial infection) Binds to the HIV-1 TAR RNA which is located in the long terminal repeat (LTR) of HIV-1. Post-translationally, phosphorylated by the P-TEFb complex at sites next to its RNA recognition motif, promoting its release from chromatin. Sumoylated. In terms of processing, poly-ADP-ribosylated by PARP1, thereby preventing RNA-binding and relieving transcription pausing. As to expression, widely expressed. Expressed in heart, brain, lung, placenta, liver, skeletal muscle, kidney and pancreas.

The protein resides in the nucleus. Its subcellular location is the chromosome. Essential component of the NELF complex, a complex that negatively regulates the elongation of transcription by RNA polymerase II. The NELF complex, which acts via an association with the DSIF complex and causes transcriptional pausing, is counteracted by the P-TEFb kinase complex. Provides the strongest RNA binding activity of the NELF complex and may initially recruit the NELF complex to RNA. In terms of biological role, (Microbial infection) The NELF complex is involved in HIV-1 latency possibly involving recruitment of PCF11 to paused RNA polymerase II. This Homo sapiens (Human) protein is Negative elongation factor E (NELFE).